Reading from the N-terminus, the 262-residue chain is Acyl-[acyl-carrier-protein]--UDP-N-acetylglucosamine O-acyltransferase (262 aa).

It belongs to the transferase hexapeptide repeat family. LpxA subfamily. Homotrimer.

Its subcellular location is the cytoplasm. The enzyme catalyses a (3R)-hydroxyacyl-[ACP] + UDP-N-acetyl-alpha-D-glucosamine = a UDP-3-O-[(3R)-3-hydroxyacyl]-N-acetyl-alpha-D-glucosamine + holo-[ACP]. It participates in glycolipid biosynthesis; lipid IV(A) biosynthesis; lipid IV(A) from (3R)-3-hydroxytetradecanoyl-[acyl-carrier-protein] and UDP-N-acetyl-alpha-D-glucosamine: step 1/6. Functionally, involved in the biosynthesis of lipid A, a phosphorylated glycolipid that anchors the lipopolysaccharide to the outer membrane of the cell. The sequence is that of Acyl-[acyl-carrier-protein]--UDP-N-acetylglucosamine O-acyltransferase from Salmonella typhi.